The chain runs to 910 residues: Disease resistance protein RPH8A (910 aa).

Positions 15–57 (DLLSRESERLQGIDEQLDGLKRQLRSLQSLLKDADAKKHGSDR) form a coiled coil. The region spanning 146–459 (RQRVQREIRQ…AEGIYDGSTI (314 aa)) is the NB-ARC domain. 192-199 (GMGGIGKT) serves as a coordination point for ATP.

It belongs to the disease resistance NB-LRR family. RPP8/HRT subfamily.

Disease resistance protein. Resistance proteins guard the plant against pathogens that contain an appropriate avirulence protein via an indirect interaction with this avirulence protein. That triggers a defense system including the hypersensitive response, which restricts the pathogen growth. In contrast to RPP8, it does not specifically recognize the Emco5 avirulence protein from Hyaloperonospora parasitica. The sequence is that of Disease resistance protein RPH8A (RPH8A) from Arabidopsis thaliana (Mouse-ear cress).